The primary structure comprises 312 residues: Gamma-soluble NSF attachment protein (312 aa).

Residues 281-312 (KKKAAAPPQAKPEGTAAPAAEEEEDEYAGGLC) form a disordered region. Residues 285 to 299 (AAPPQAKPEGTAAPA) show a composition bias toward low complexity. Positions 300 to 312 (AEEEEDEYAGGLC) are enriched in acidic residues.

The protein belongs to the SNAP family. As to quaternary structure, interacts with RAB11FIP5. Interacts with VTI1A.

The protein resides in the membrane. The protein localises to the golgi apparatus. In terms of biological role, required for vesicular transport between the endoplasmic reticulum and the Golgi apparatus. This Bos taurus (Bovine) protein is Gamma-soluble NSF attachment protein.